The primary structure comprises 491 residues: Probable glycine dehydrogenase (decarboxylating) subunit 2 (491 aa).

Lys-273 carries the N6-(pyridoxal phosphate)lysine modification.

The protein belongs to the GcvP family. C-terminal subunit subfamily. In terms of assembly, the glycine cleavage system is composed of four proteins: P, T, L and H. In this organism, the P 'protein' is a heterodimer of two subunits. The cofactor is pyridoxal 5'-phosphate.

It catalyses the reaction N(6)-[(R)-lipoyl]-L-lysyl-[glycine-cleavage complex H protein] + glycine + H(+) = N(6)-[(R)-S(8)-aminomethyldihydrolipoyl]-L-lysyl-[glycine-cleavage complex H protein] + CO2. In terms of biological role, the glycine cleavage system catalyzes the degradation of glycine. The P protein binds the alpha-amino group of glycine through its pyridoxal phosphate cofactor; CO(2) is released and the remaining methylamine moiety is then transferred to the lipoamide cofactor of the H protein. This Bacillus cereus (strain ATCC 10987 / NRS 248) protein is Probable glycine dehydrogenase (decarboxylating) subunit 2.